The sequence spans 161 residues: Protein YzcX (161 aa).

This Escherichia coli (strain K12) protein is Protein YzcX (yzcX).